Reading from the N-terminus, the 523-residue chain is Galactarate dehydratase (L-threo-forming) (523 aa).

Belongs to the UxaA family. Homodimer. Requires Fe(2+) as cofactor.

It catalyses the reaction galactarate = 5-dehydro-4-deoxy-D-glucarate + H2O. It participates in carbohydrate acid metabolism; galactarate degradation; D-glycerate from galactarate: step 1/3. In terms of biological role, catalyzes the dehydration of galactarate to form 5-dehydro-4-deoxy-D-glucarate (5-KDG). The polypeptide is Galactarate dehydratase (L-threo-forming) (Escherichia coli (strain K12)).